We begin with the raw amino-acid sequence, 60 residues long: Large ribosomal subunit protein uL30 (60 aa).

It belongs to the universal ribosomal protein uL30 family. In terms of assembly, part of the 50S ribosomal subunit.

The polypeptide is Large ribosomal subunit protein uL30 (Lactiplantibacillus plantarum (strain ATCC BAA-793 / NCIMB 8826 / WCFS1) (Lactobacillus plantarum)).